The following is a 497-amino-acid chain: Protein DML1 (497 aa).

This sequence belongs to the misato family.

The protein resides in the mitochondrion. In terms of biological role, involved in the partitioning of the mitochondrial organelle and mitochondrial DNA (mtDNA) inheritance. This is Protein DML1 (DML1) from Gibberella zeae (strain ATCC MYA-4620 / CBS 123657 / FGSC 9075 / NRRL 31084 / PH-1) (Wheat head blight fungus).